Consider the following 2360-residue polypeptide: DNA (cytosine-5-)-methyltransferase DMT5 (2360 aa).

The SAM-dependent MTase C5-type domain maps to 48 to 507; that stretch reads FTVGTMCSGT…LCILIAERQV (460 aa). Cys-146 is an active-site residue. One can recognise a Helicase ATP-binding domain in the interval 1258 to 1575; that stretch reads AEVVNRARGG…CAIADLVNMH (318 aa). Residue 1271-1278 participates in ATP binding; that stretch reads HDVGFGKT. A disordered region spans residues 1451–1498; the sequence is SRRKDQKSKATARTQRAKKKSKKPRRTAAAAAESDHSAESDSDSAMDD. Basic residues predominate over residues 1465-1476; that stretch reads QRAKKKSKKPRR. The RING-type; degenerate zinc finger occupies 2018–2070; sequence CSVCGSQDNTEMKDLSLFITCGHLLCSGCVAAHEHQHGQAESTTGEVLCPVDS. Residues 2102–2267 form the Helicase C-terminal domain; that stretch reads KVMKILDVIR…RMPLDDLDYK (166 aa).

The protein in the N-terminal section; belongs to the class I-like SAM-binding methyltransferase superfamily. C5-methyltransferase family. It in the C-terminal section; belongs to the SNF2/RAD54 helicase family.

The protein localises to the nucleus. The protein resides in the chromosome. The enzyme catalyses a 2'-deoxycytidine in DNA + S-adenosyl-L-methionine + ATP + H2O = a 5-methyl-2'-deoxycytidine in DNA + S-adenosyl-L-homocysteine + ADP + phosphate + 2 H(+). May play a role in cytosine methylation at palindromic 5'-CG-3' and 5'-C[ACT]G-3' sites in DNA. The sequence is that of DNA (cytosine-5-)-methyltransferase DMT5 from Verticillium dahliae (strain VdLs.17 / ATCC MYA-4575 / FGSC 10137) (Verticillium wilt).